The primary structure comprises 231 residues: 2-C-methyl-D-erythritol 4-phosphate cytidylyltransferase (231 aa).

Belongs to the IspD/TarI cytidylyltransferase family. IspD subfamily.

It carries out the reaction 2-C-methyl-D-erythritol 4-phosphate + CTP + H(+) = 4-CDP-2-C-methyl-D-erythritol + diphosphate. It participates in isoprenoid biosynthesis; isopentenyl diphosphate biosynthesis via DXP pathway; isopentenyl diphosphate from 1-deoxy-D-xylulose 5-phosphate: step 2/6. Functionally, catalyzes the formation of 4-diphosphocytidyl-2-C-methyl-D-erythritol from CTP and 2-C-methyl-D-erythritol 4-phosphate (MEP). This Xylella fastidiosa (strain 9a5c) protein is 2-C-methyl-D-erythritol 4-phosphate cytidylyltransferase.